Consider the following 182-residue polypeptide: NADH-quinone oxidoreductase subunit B 2 (182 aa).

[4Fe-4S] cluster is bound by residues Cys55, Cys56, Cys120, and Cys150.

This sequence belongs to the complex I 20 kDa subunit family. As to quaternary structure, NDH-1 is composed of 14 different subunits. Subunits NuoB, C, D, E, F, and G constitute the peripheral sector of the complex. It depends on [4Fe-4S] cluster as a cofactor.

The protein resides in the cell inner membrane. The enzyme catalyses a quinone + NADH + 5 H(+)(in) = a quinol + NAD(+) + 4 H(+)(out). In terms of biological role, NDH-1 shuttles electrons from NADH, via FMN and iron-sulfur (Fe-S) centers, to quinones in the respiratory chain. The immediate electron acceptor for the enzyme in this species is believed to be ubiquinone. Couples the redox reaction to proton translocation (for every two electrons transferred, four hydrogen ions are translocated across the cytoplasmic membrane), and thus conserves the redox energy in a proton gradient. The sequence is that of NADH-quinone oxidoreductase subunit B 2 from Sorangium cellulosum (strain So ce56) (Polyangium cellulosum (strain So ce56)).